Consider the following 375-residue polypeptide: Alanine racemase (375 aa).

Lys-38 serves as the catalytic Proton acceptor; specific for D-alanine. Lys-38 is modified (N6-(pyridoxal phosphate)lysine). Arg-137 provides a ligand contact to substrate. The active-site Proton acceptor; specific for L-alanine is the Tyr-266. Met-314 serves as a coordination point for substrate.

This sequence belongs to the alanine racemase family. Requires pyridoxal 5'-phosphate as cofactor.

The enzyme catalyses L-alanine = D-alanine. It functions in the pathway amino-acid biosynthesis; D-alanine biosynthesis; D-alanine from L-alanine: step 1/1. In terms of biological role, catalyzes the interconversion of L-alanine and D-alanine. May also act on other amino acids. The protein is Alanine racemase (alr) of Cutibacterium acnes (strain DSM 16379 / KPA171202) (Propionibacterium acnes).